Reading from the N-terminus, the 352-residue chain is Thrombopoietin (352 aa).

A signal peptide spans 1 to 23; it reads MELTELLLVVMLLLTARLDPCLP. Intrachain disulfides connect C28–C172 and C50–C106. N-linked (GlcNAc...) asparagine glycosylation is found at N185, N197, N206, N234, and N255. Positions 233 to 245 are enriched in polar residues; the sequence is LNQTSRSLNQTPG. Disordered regions lie at residues 233-259 and 292-352; these read LNQT…GTHG and YSPS…SQEE. The span at 311-327 shows a compositional bias: pro residues; sequence PTSPTPQNPLQPPPPDP. N-linked (GlcNAc...) asparagine glycans are attached at residues N332 and N347.

This sequence belongs to the EPO/TPO family.

The protein localises to the secreted. Functionally, lineage-specific cytokine affecting the proliferation and maturation of megakaryocytes from their committed progenitor cells. It acts at a late stage of megakaryocyte development. It may be the major physiological regulator of circulating platelets. This Canis lupus familiaris (Dog) protein is Thrombopoietin (THPO).